The chain runs to 402 residues: Protein DesVIII (402 aa).

It belongs to the cytochrome P450 family. As to quaternary structure, forms a complex with DesVII.

The protein operates within antibiotic biosynthesis. Its function is as follows. Involved in the biosynthesis of the macrolide antibiotics methymycin, neomethymycin, narbomycin, and pikromycin. DesVIII assists the folding of the DesVII polypeptide. However, unlike chaperones, it remains bound to DesVII during catalysis, forming a tight DesVII/DesVIII complex. Although the formation of the DesVII/DesVIII complex is essential for the catalytic activity, DesVIII is unlikely to be involved in catalysis directly. The polypeptide is Protein DesVIII (Streptomyces venezuelae).